The following is a 430-amino-acid chain: UDP-N-acetylglucosamine 1-carboxyvinyltransferase 1 (430 aa).

Residue 22-23 (KN) coordinates phosphoenolpyruvate. Arginine 93 lines the UDP-N-acetyl-alpha-D-glucosamine pocket. The active-site Proton donor is the cysteine 117. At cysteine 117 the chain carries 2-(S-cysteinyl)pyruvic acid O-phosphothioketal. UDP-N-acetyl-alpha-D-glucosamine is bound by residues 122–126 (RPVDL), aspartate 305, and valine 327.

This sequence belongs to the EPSP synthase family. MurA subfamily.

The protein localises to the cytoplasm. The enzyme catalyses phosphoenolpyruvate + UDP-N-acetyl-alpha-D-glucosamine = UDP-N-acetyl-3-O-(1-carboxyvinyl)-alpha-D-glucosamine + phosphate. The protein operates within cell wall biogenesis; peptidoglycan biosynthesis. Cell wall formation. Adds enolpyruvyl to UDP-N-acetylglucosamine. This is UDP-N-acetylglucosamine 1-carboxyvinyltransferase 1 from Listeria innocua serovar 6a (strain ATCC BAA-680 / CLIP 11262).